The sequence spans 154 residues: MPVSAPSPPRLHSPFIHCPINFTPSSFSARNLRSPSTSYPRIKAELDPNTVVAISVGVASVALGIGIPVFYETQIDNAAKRENTQPCFPCNGTGAQKCRLCVGSGNVTVELGGGEKEVSNCINCDGAGSLTCTTCQGSGVQPRYLDRREFKDDD.

The transit peptide at 1 to 43 (MPVSAPSPPRLHSPFIHCPINFTPSSFSARNLRSPSTSYPRIK) directs the protein to the chloroplast. A helical membrane pass occupies residues 51–71 (VVAISVGVASVALGIGIPVFY). Residues 77-147 (NAAKRENTQP…SGVQPRYLDR (71 aa)) form a CR-type zinc finger. Zn(2+) contacts are provided by Cys87, Cys90, Cys98, Cys101, Cys121, Cys124, Cys132, and Cys135.

Belongs to the BSD2 chaperone family. In terms of assembly, interacts with the photosystem II core subunits. Interacts with HHL1. Zn(2+) is required as a cofactor.

It is found in the plastid. It localises to the chloroplast thylakoid membrane. It carries out the reaction Catalyzes the rearrangement of -S-S- bonds in proteins.. Its function is as follows. Protein disulfide-isomerase probably involved upon formation of a complex with HHL1 in maintaining photosystem II (PSII) activity under high light by regulating repair and reassembly of PSII complexes. The sequence is that of Protein disulfide-isomerase LQY1, chloroplastic from Arabidopsis thaliana (Mouse-ear cress).